The primary structure comprises 241 residues: Tetraspanin-1 (241 aa).

Over 1–11 the chain is Cytoplasmic; it reads MQCFSFIKTMM. Residues 12–32 form a helical membrane-spanning segment; the sequence is ILFNLLIFLCGAALLAVGIWV. Topologically, residues 33–52 are extracellular; the sequence is SIDGASFLKIFGPLSSSAMQ. Residues 53–73 traverse the membrane as a helical segment; it reads FVNVGYFLIAAGVVVFALGFL. Residues 74–88 lie on the Cytoplasmic side of the membrane; it reads GCYGAKTESKCALVT. Residues 89–109 form a helical membrane-spanning segment; it reads FFFILLLIFIAEVAAAVVALV. The Extracellular portion of the chain corresponds to 110-211; the sequence is YTTMAEHFLT…NQLLYDIRTN (102 aa). 4 N-linked (GlcNAc...) asparagine glycosylation sites follow: asparagine 141, asparagine 154, asparagine 178, and asparagine 184. A helical transmembrane segment spans residues 212–232; that stretch reads AVTVGGVAAGIGGLELAAMIV. Over 233–241 the chain is Cytoplasmic; that stretch reads SMYLYCNLQ.

Belongs to the tetraspanin (TM4SF) family. As to quaternary structure, interacts with SLC19A2. Interacts with NTRK1/TRKA.

Its subcellular location is the cell membrane. The protein resides in the lysosome membrane. In terms of biological role, structural component of specialized membrane microdomains known as tetraspanin-enriched microdomains (TERMs), which act as platforms for receptor clustering and signaling. Participates thereby in diverse biological functions such as cell signal transduction, adhesion, migration and protein trafficking. Regulates neuronal differentiation in response to NGF by facilitating NGF-mediated activation of NTRK1/TRKA receptor tyrosine kinase and subsequent downstream signaling pathways. Plays a role in the inhibition of TNFalpha-induced apoptosis. Mechanistically, inhibits the NF-kappa-B signaling pathway by blocking phosphorylation of CHUK. Also promotes the stability of the thiamine transporter 1/SLC19A2 in intestinal epithelial cells leading to an increase of thiamine uptake process. This chain is Tetraspanin-1 (TSPAN1), found in Homo sapiens (Human).